The following is an 881-amino-acid chain: Squamosa promoter-binding-like protein 1 (881 aa).

The disordered stretch occupies residues 49-69; that stretch reads FPLGNSSNSSSSCSDEGNDKK. Low complexity predominate over residues 53–62; the sequence is NSSNSSSSCS. The segment at 96–187 is sufficient and necessary for DNA binding; the sequence is PAKKTKSGAV…RKTNPEPGAN (92 aa). The SBP-type zinc finger occupies 103-180; that stretch reads GAVCQVENCE…AGHNKRRRKT (78 aa). Zn(2+) is bound by residues cysteine 106, cysteine 111, cysteine 128, histidine 131, cysteine 147, cysteine 150, histidine 154, and cysteine 166. Residues 163–179 carry the Bipartite nuclear localization signal motif; the sequence is KRSCRRRLAGHNKRRRK. The span at 170 to 179 shows a compositional bias: basic residues; sequence LAGHNKRRRK. 2 disordered regions span residues 170-193 and 274-358; these read LAGH…PSDD and FSAR…EDAQ. The span at 275–284 shows a compositional bias: polar residues; that stretch reads SARQDGTATE. A compositionally biased stretch (basic and acidic residues) spans 285-295; it reads NRSEKQVKMND. The segment covering 319–338 has biased composition (polar residues); sequence PATSSLDYPSWIHQSSPPQT. Positions 339–356 are enriched in low complexity; the sequence is SRNSDSASDQSPSSSSED.

Zn(2+) is required as a cofactor.

It is found in the nucleus. Its function is as follows. Trans-acting factor that binds specifically to the consensus nucleotide sequence 5'-TNCGTACAA-3' of AP1 promoter. Binds specifically to the 5'-GTAC-3' core sequence. This Arabidopsis thaliana (Mouse-ear cress) protein is Squamosa promoter-binding-like protein 1 (SPL1).